The chain runs to 345 residues: MAEFFNTPGGIAVIILAQTLAVVAFVMISLLFLVYGDRKIWAAVQMRRGPNVVGVYGLLQTVADALKYVVKEVVIPAGSDRTVFILAPLTSFVLAMIAWAVIPFNDTWVLSDINVAILYVFAVSSLEVYGVIMGGWASNSKYPFLGSLRSAAQMISYEVSIGLIIIGVILSTGSMNFGDIVRAQDGDAGLFNWYWLPHFPMVFLFFISCLAETNRPPFDLPEAESELVAGYQVEYSSTPFLLFMAGEYIAIFLMCALTSLLFFGGWLSPVPFLPDSPLWMVAKMAFFFFLFAMVKAITPRYRYDQLMRLGWKVFLPFSLIWVVFVAFAARFEWFWGAFARWSTGG.

A run of 8 helical transmembrane segments spans residues 13–33 (VIIL…LLFL), 84–104 (FILA…VIPF), 115–135 (VAIL…IMGG), 161–181 (IGLI…GDIV), 190–210 (LFNW…ISCL), 248–268 (YIAI…GWLS), 277–297 (PLWM…VKAI), and 309–329 (LGWK…AFAA).

It belongs to the complex I subunit 1 family. NDH-1 is composed of 14 different subunits. Subunits NuoA, H, J, K, L, M, N constitute the membrane sector of the complex.

Its subcellular location is the cell inner membrane. The enzyme catalyses a quinone + NADH + 5 H(+)(in) = a quinol + NAD(+) + 4 H(+)(out). NDH-1 shuttles electrons from NADH, via FMN and iron-sulfur (Fe-S) centers, to quinones in the respiratory chain. The immediate electron acceptor for the enzyme in this species is believed to be ubiquinone. Couples the redox reaction to proton translocation (for every two electrons transferred, four hydrogen ions are translocated across the cytoplasmic membrane), and thus conserves the redox energy in a proton gradient. This subunit may bind ubiquinone. This chain is NADH-quinone oxidoreductase subunit H, found in Ruegeria sp. (strain TM1040) (Silicibacter sp.).